We begin with the raw amino-acid sequence, 300 residues long: MQQIHPAGQATLLADTRNTLGEGATWCDRTRALYWVDIEGAQLWRCRADGSDLTPWPMPERLACFALTDDPDVLLVGLATHLAFFDLRSGAFTRIVEVEPELPTRLNDGRCDGSGAFVFGMKDEGAEPPRAVGGFYRLNADLTLERLALPPAAIANSIGFSPDGSKMYFCDSLVREIFVCDYRPGGEVANVRPFARLTDPDGDPDGSIVDRDGGLWNAQWGGRRVVRYGPDGVETDRVAVPTAQPSCTALDGEGRLYVTSARVGLSDDALADDPHAGGVFVAQTRHAGMATARFAGTPRG.

Residues E22, N156, and D205 each coordinate a divalent metal cation.

It belongs to the SMP-30/CGR1 family. A divalent metal cation is required as a cofactor.

The enzyme catalyses L-arabinono-1,4-lactone + H2O = L-arabinonate + H(+). In terms of biological role, catalyzes the cleavage of L-arabino-gamma-lactone to L-arabonate. Is involved in a degradation pathway of L-arabinose that allows A.brasilense to grow on L-arabinose as a sole carbon source. Can also use D-galactono-1,4-lactone as substrate in vitro; however, the enzyme is probably not involved in the metabolism of D-galactose in vivo. The polypeptide is L-arabinolactonase (araB) (Azospirillum brasilense).